We begin with the raw amino-acid sequence, 632 residues long: ATP-dependent DNA helicase RecQ (632 aa).

The region spanning 47–215 is the Helicase ATP-binding domain; it reads IDATLMGKDS…LRHLNLQSPH (169 aa). 60–67 lines the ATP pocket; sequence MATGNGKS. Residues 159-162 carry the DEAH box motif; that stretch reads DEAH. The Helicase C-terminal domain occupies 236–385; that stretch reads PMEQLCRFVL…IEALKLQAIG (150 aa). Zn(2+) contacts are provided by cysteine 393, cysteine 410, cysteine 413, and cysteine 416. The HRDC domain maps to 544–624; it reads AQYDKDLFAR…QQHKKVLTQH (81 aa).

It belongs to the helicase family. RecQ subfamily. Mg(2+) serves as cofactor. The cofactor is Zn(2+).

The catalysed reaction is Couples ATP hydrolysis with the unwinding of duplex DNA by translocating in the 3'-5' direction.. It catalyses the reaction ATP + H2O = ADP + phosphate + H(+). Its function is as follows. An ATP-dependent DNA helicase which unwinds DNA in a 3'-5' direction. Plays a role in recombination. The sequence is that of ATP-dependent DNA helicase RecQ from Pasteurella multocida (strain Pm70).